We begin with the raw amino-acid sequence, 210 residues long: Thymidylate kinase (210 aa).

10 to 17 (GPEGAGKS) contacts ATP.

This sequence belongs to the thymidylate kinase family.

The catalysed reaction is dTMP + ATP = dTDP + ADP. Its function is as follows. Phosphorylation of dTMP to form dTDP in both de novo and salvage pathways of dTTP synthesis. In Pseudomonas aeruginosa (strain LESB58), this protein is Thymidylate kinase.